The sequence spans 85 residues: Large ribosomal subunit protein bL27 (85 aa).

The disordered stretch occupies residues Met1–Gly22.

The protein belongs to the bacterial ribosomal protein bL27 family.

The polypeptide is Large ribosomal subunit protein bL27 (Sulfurimonas denitrificans (strain ATCC 33889 / DSM 1251) (Thiomicrospira denitrificans (strain ATCC 33889 / DSM 1251))).